A 175-amino-acid chain; its full sequence is Microfibril-associated glycoprotein 3 (175 aa).

The Cytoplasmic portion of the chain corresponds to 1-175; it reads FRTEGAEKLQ…KDGSFESCQL (175 aa). Residues 85–175 form a disordered region; sequence KERPALNAQD…KDGSFESCQL (91 aa). Residues 145-175 show a composition bias toward polar residues; that stretch reads QDSSHFSPPDDTGSTESNSNYKDGSFESCQL.

Glycosylated.

It localises to the cell membrane. Functionally, component of the elastin-associated microfibrils. In Bos taurus (Bovine), this protein is Microfibril-associated glycoprotein 3 (MFAP3).